The following is a 136-amino-acid chain: Protein NrdI (136 aa).

This sequence belongs to the NrdI family.

Functionally, probably involved in ribonucleotide reductase function. This chain is Protein NrdI, found in Salmonella newport (strain SL254).